The following is a 347-amino-acid chain: MDNVIGLEIIEVVEQAAIASARWMGKGDKNMADQAAVDAMRNRMNQIHMRGRIVIGEGERDEAPMLYIGEEVGICTRPDAAQYCNPEELIEIDIAVDPCEGTNLCAYGQPGSMAVLAISEKGGLFAAPDFYMKKLAAPPAAKGKVDIRNSATENLKILSECLDRAIDELVVVVMKRDRHNDLIQEIRDAGARVQLISDGDVSAALACAFSGTNIHALMGIGAAPEGVISAAAMRALGGHFQGQLVYDPAVVMTKEWANRTREGNLEELKKAGITDPDKVYEAEELASGETVLFAACGITPGMLMKGVRFFKGGARTQSLVISTQSKTARFVDTIHMFDQQLKSLQLY.

Residues D33, E57, D97, and E100 each contribute to the Mn(2+) site. Residues 100-102 (EGT), Y131, 176-178 (RDR), and 198-200 (DGD) contribute to the substrate site. A Mn(2+)-binding site is contributed by E225.

The protein belongs to the FBPase class 2 family. In terms of assembly, homotetramer. Mn(2+) is required as a cofactor.

The catalysed reaction is beta-D-fructose 1,6-bisphosphate + H2O = beta-D-fructose 6-phosphate + phosphate. The enzyme catalyses D-sedoheptulose 1,7-bisphosphate + H2O = D-sedoheptulose 7-phosphate + phosphate. It functions in the pathway carbohydrate biosynthesis; Calvin cycle. Functionally, catalyzes the hydrolysis of fructose 1,6-bisphosphate (Fru 1,6-P2) and sedoheptulose 1,7-bisphosphate (Sed 1,7-P2) to fructose 6-phosphate and sedoheptulose 7-phosphate, respectively. This chain is D-fructose 1,6-bisphosphatase class 2/sedoheptulose 1,7-bisphosphatase, found in Thermosynechococcus vestitus (strain NIES-2133 / IAM M-273 / BP-1).